Here is a 125-residue protein sequence, read N- to C-terminus: Small ribosomal subunit protein uS13 (125 aa).

The disordered stretch occupies residues Pro-97–Ser-125. Residues Gln-101–Ser-125 show a composition bias toward basic residues.

Belongs to the universal ribosomal protein uS13 family. In terms of assembly, part of the 30S ribosomal subunit. Forms a loose heterodimer with protein S19. Forms two bridges to the 50S subunit in the 70S ribosome.

Its function is as follows. Located at the top of the head of the 30S subunit, it contacts several helices of the 16S rRNA. In the 70S ribosome it contacts the 23S rRNA (bridge B1a) and protein L5 of the 50S subunit (bridge B1b), connecting the 2 subunits; these bridges are implicated in subunit movement. Contacts the tRNAs in the A and P-sites. In Thermotoga neapolitana (strain ATCC 49049 / DSM 4359 / NBRC 107923 / NS-E), this protein is Small ribosomal subunit protein uS13.